Here is a 455-residue protein sequence, read N- to C-terminus: Ornithine decarboxylase (455 aa).

Lys67 carries the N6-(pyridoxal phosphate)lysine modification. Pyridoxal 5'-phosphate-binding positions include Ser197, Gly234, and 271–274 (EPGR). Residue Ser297 is modified to Phosphoserine; by CK2. 325 to 326 (YD) is a substrate binding site. Catalysis depends on Cys354, which acts as the Proton donor; shared with dimeric partner. Cys354 carries the post-translational modification S-nitrosocysteine. Asp355 contributes to the substrate binding site. Tyr383 contributes to the pyridoxal 5'-phosphate binding site.

The protein belongs to the Orn/Lys/Arg decarboxylase class-II family. As to quaternary structure, homodimer. Only the dimer is catalytically active, as the active sites are constructed of residues from both monomers. It depends on pyridoxal 5'-phosphate as a cofactor.

The enzyme catalyses L-ornithine + H(+) = putrescine + CO2. It functions in the pathway amine and polyamine biosynthesis; putrescine biosynthesis via L-ornithine pathway; putrescine from L-ornithine: step 1/1. Its activity is regulated as follows. Inhibited by antizymes (AZs) OAZ1, OAZ2 and OAZ3 in response to polyamine levels. AZs inhibit the assembly of the functional homodimer by binding to ODC monomers. Additionally, OAZ1 targets ODC monomers for ubiquitin-independent proteolytic destruction by the 26S proteasome. Functionally, catalyzes the first and rate-limiting step of polyamine biosynthesis that converts ornithine into putrescine, which is the precursor for the polyamines, spermidine and spermine. Polyamines are essential for cell proliferation and are implicated in cellular processes, ranging from DNA replication to apoptosis. In Cricetulus griseus (Chinese hamster), this protein is Ornithine decarboxylase (ODC1).